The following is a 279-amino-acid chain: Acetyl-coenzyme A carboxylase carboxyl transferase subunit beta (279 aa).

The CoA carboxyltransferase N-terminal domain maps to 23–279; sequence LWSKCDECGA…LIKLFKHLRG (257 aa). The Zn(2+) site is built by C27, C30, C46, and C49. The segment at 27-49 adopts a C4-type zinc-finger fold; it reads CDECGAALHKKQLEDHLYTCPEC.

The protein belongs to the AccD/PCCB family. As to quaternary structure, acetyl-CoA carboxylase is a heterohexamer composed of biotin carboxyl carrier protein (AccB), biotin carboxylase (AccC) and two subunits each of ACCase subunit alpha (AccA) and ACCase subunit beta (AccD). It depends on Zn(2+) as a cofactor.

It localises to the cytoplasm. It carries out the reaction N(6)-carboxybiotinyl-L-lysyl-[protein] + acetyl-CoA = N(6)-biotinyl-L-lysyl-[protein] + malonyl-CoA. Its pathway is lipid metabolism; malonyl-CoA biosynthesis; malonyl-CoA from acetyl-CoA: step 1/1. Its function is as follows. Component of the acetyl coenzyme A carboxylase (ACC) complex. Biotin carboxylase (BC) catalyzes the carboxylation of biotin on its carrier protein (BCCP) and then the CO(2) group is transferred by the transcarboxylase to acetyl-CoA to form malonyl-CoA. This Chlorobaculum parvum (strain DSM 263 / NCIMB 8327) (Chlorobium vibrioforme subsp. thiosulfatophilum) protein is Acetyl-coenzyme A carboxylase carboxyl transferase subunit beta.